The sequence spans 578 residues: Serine/threonine-protein kinase D6PKL3 (578 aa).

Low complexity predominate over residues 1-24; sequence MDSSSSVVYVGSSSKSRNFQSKSK. A disordered region spans residues 1 to 64; the sequence is MDSSSSVVYV…EVIESSVSSV (64 aa). The span at 25 to 34 shows a compositional bias: polar residues; that stretch reads GSITSFSIDS. The span at 53–64 shows a compositional bias: low complexity; sequence SPEVIESSVSSV. A Protein kinase domain is found at 182-516; the sequence is FKLIKKLGGG…ATEIKQHPFF (335 aa). ATP contacts are provided by residues 188–196 and lysine 211; that span reads LGGGDIGNV. Aspartate 307 acts as the Proton acceptor in catalysis. The activation loop stretch occupies residues 325–426; sequence DFDLSLRCAV…VGTHEYLAPE (102 aa). A PIF motif is present at residues 575 to 578; that stretch reads IDFF.

The protein belongs to the protein kinase superfamily. AGC Ser/Thr protein kinase family. Expressed predominantly in root tissue with lower levels found in leaf, stem, seed and flower.

Its subcellular location is the cell membrane. It catalyses the reaction L-seryl-[protein] + ATP = O-phospho-L-seryl-[protein] + ADP + H(+). The enzyme catalyses L-threonyl-[protein] + ATP = O-phospho-L-threonyl-[protein] + ADP + H(+). Its function is as follows. Protein kinase that regulates the auxin transport activity of PIN auxin efflux facilitators by direct phosphorylation. D6PK-mediated PIN phosphorylation promotes auxin transport in the hypocotyl and this is a prerequisite for PHOT1-dependent hypocotyl bending. This chain is Serine/threonine-protein kinase D6PKL3 (D6PKL3), found in Arabidopsis thaliana (Mouse-ear cress).